The chain runs to 161 residues: Transcription elongation factor GreA (161 aa).

The stretch at 43 to 68 (SENAEYEAAREKQAFVEARIKHLEDI) forms a coiled coil.

Belongs to the GreA/GreB family.

In terms of biological role, necessary for efficient RNA polymerase transcription elongation past template-encoded arresting sites. The arresting sites in DNA have the property of trapping a certain fraction of elongating RNA polymerases that pass through, resulting in locked ternary complexes. Cleavage of the nascent transcript by cleavage factors such as GreA or GreB allows the resumption of elongation from the new 3'terminus. GreA releases sequences of 2 to 3 nucleotides. This chain is Transcription elongation factor GreA, found in Rickettsia bellii (strain OSU 85-389).